Consider the following 196-residue polypeptide: Imidazoleglycerol-phosphate dehydratase (196 aa).

The protein belongs to the imidazoleglycerol-phosphate dehydratase family.

The protein resides in the cytoplasm. The enzyme catalyses D-erythro-1-(imidazol-4-yl)glycerol 3-phosphate = 3-(imidazol-4-yl)-2-oxopropyl phosphate + H2O. The protein operates within amino-acid biosynthesis; L-histidine biosynthesis; L-histidine from 5-phospho-alpha-D-ribose 1-diphosphate: step 6/9. This chain is Imidazoleglycerol-phosphate dehydratase, found in Lachnoclostridium phytofermentans (strain ATCC 700394 / DSM 18823 / ISDg) (Clostridium phytofermentans).